Here is a 248-residue protein sequence, read N- to C-terminus: Acetylglutamate kinase (248 aa).

Substrate-binding positions include 36-37 (GG), Arg-58, and Asn-147.

It belongs to the acetylglutamate kinase family. ArgB subfamily.

It is found in the cytoplasm. The enzyme catalyses N-acetyl-L-glutamate + ATP = N-acetyl-L-glutamyl 5-phosphate + ADP. Its pathway is amino-acid biosynthesis; L-arginine biosynthesis; N(2)-acetyl-L-ornithine from L-glutamate: step 2/4. Catalyzes the ATP-dependent phosphorylation of N-acetyl-L-glutamate. This Thermus thermophilus (strain ATCC BAA-163 / DSM 7039 / HB27) protein is Acetylglutamate kinase.